We begin with the raw amino-acid sequence, 355 residues long: UDP-N-acetylglucosamine--N-acetylmuramyl-(pentapeptide) pyrophosphoryl-undecaprenol N-acetylglucosamine transferase (355 aa).

UDP-N-acetyl-alpha-D-glucosamine contacts are provided by residues 15–17 (TGG), Asn127, Arg163, Ser191, Ile244, 263–268 (ALTVSE), and Gln288.

This sequence belongs to the glycosyltransferase 28 family. MurG subfamily.

The protein resides in the cell inner membrane. The enzyme catalyses di-trans,octa-cis-undecaprenyl diphospho-N-acetyl-alpha-D-muramoyl-L-alanyl-D-glutamyl-meso-2,6-diaminopimeloyl-D-alanyl-D-alanine + UDP-N-acetyl-alpha-D-glucosamine = di-trans,octa-cis-undecaprenyl diphospho-[N-acetyl-alpha-D-glucosaminyl-(1-&gt;4)]-N-acetyl-alpha-D-muramoyl-L-alanyl-D-glutamyl-meso-2,6-diaminopimeloyl-D-alanyl-D-alanine + UDP + H(+). Its pathway is cell wall biogenesis; peptidoglycan biosynthesis. Its function is as follows. Cell wall formation. Catalyzes the transfer of a GlcNAc subunit on undecaprenyl-pyrophosphoryl-MurNAc-pentapeptide (lipid intermediate I) to form undecaprenyl-pyrophosphoryl-MurNAc-(pentapeptide)GlcNAc (lipid intermediate II). This Sodalis glossinidius (strain morsitans) protein is UDP-N-acetylglucosamine--N-acetylmuramyl-(pentapeptide) pyrophosphoryl-undecaprenol N-acetylglucosamine transferase.